A 118-amino-acid chain; its full sequence is UPF0102 protein lpg2994 (118 aa).

The protein belongs to the UPF0102 family.

The protein is UPF0102 protein lpg2994 of Legionella pneumophila subsp. pneumophila (strain Philadelphia 1 / ATCC 33152 / DSM 7513).